A 1487-amino-acid polypeptide reads, in one-letter code: Murinoglobulin-1 (1487 aa).

Residues 1–24 form the signal peptide; sequence MKKNREAQLCLFSALLAFLPFASL. Cys-48 and Cys-86 are joined by a disulfide. Residues Asn-55 and Asn-247 are each glycosylated (N-linked (GlcNAc...) asparagine). 2 disulfides stabilise this stretch: Cys-251–Cys-283 and Cys-269–Cys-295. Residues Asn-301, Asn-321, Asn-393, and Asn-508 are each glycosylated (N-linked (GlcNAc...) asparagine). 3 disulfide bridges follow: Cys-468-Cys-563, Cys-595-Cys-784, and Cys-643-Cys-689. The segment at 686–745 is bait region; sequence PTYCYEMNMVVLSAPAVESELSPRGGEFEMMPLGVNKSPLPKEPPRKDPPPKDPVIETIR. Asn-760, Asn-787, and Asn-882 each carry an N-linked (GlcNAc...) asparagine glycan. Cystine bridges form between Cys-860–Cys-896, Cys-934–Cys-1334, Cys-1092–Cys-1140, and Cys-1365–Cys-1480. Residues 985–988 constitute a cross-link (isoglutamyl cysteine thioester (Cys-Gln)); sequence CGEQ. A glycan (N-linked (GlcNAc...) asparagine) is linked at Asn-1004. 3 N-linked (GlcNAc...) asparagine glycosylation sites follow: Asn-1153, Asn-1324, and Asn-1437.

The protein belongs to the protease inhibitor I39 (alpha-2-macroglobulin) family. As to quaternary structure, monomer. As to expression, plasma.

Its subcellular location is the secreted. A proteinase activates the inhibitor by specific proteolysis in the bait region, which, by an unknown mechanism leads to reaction at the cysteinyl-glutamyl internal thiol ester site and to a conformational change, whereby the proteinase is trapped and/or covalently bound to the inhibitor. While in the tetrameric proteinase inhibitors steric inhibition is sufficiently strong, monomeric forms need a covalent linkage between the activated glutamyl residue of the original thiol ester and a terminal amino group of a lysine or another nucleophilic group on the proteinase, for inhibition to be effective. This is Murinoglobulin-1 from Rattus norvegicus (Rat).